Consider the following 192-residue polypeptide: MDTSRLTLNHFLSRFQLLRPQMTHETLNQRQAAVLIPVVRRPQPGLLLTQRAIHLRKHAGQVAFPGGAVDSTDASLIAAALREAQEEVAIPPQAVEVIGVLPPVDSVTGFQVTPVVGIIPPNLPWRASEDEVSAVFEMPLAQALQLGRYHPLDVYRRGNSHRVWLSWYEHYFVWGMTANILRELALQIGVKP.

A Nudix hydrolase domain is found at 29–160 (QRQAAVLIPV…PLDVYRRGNS (132 aa)). Residues 67 to 89 (GAVDSTDASLIAAALREAQEEVA) carry the Nudix box motif. Positions 83 and 87 each coordinate Mg(2+).

It belongs to the Nudix hydrolase family. PCD1 subfamily. It depends on Mn(2+) as a cofactor. Mg(2+) serves as cofactor.

Its function is as follows. Probably mediates the hydrolysis of some nucleoside diphosphate derivatives. This is an uncharacterized protein from Salmonella newport (strain SL254).